The sequence spans 87 residues: Small ribosomal subunit protein bS18 (87 aa).

Belongs to the bacterial ribosomal protein bS18 family. As to quaternary structure, part of the 30S ribosomal subunit. Forms a tight heterodimer with protein bS6.

Binds as a heterodimer with protein bS6 to the central domain of the 16S rRNA, where it helps stabilize the platform of the 30S subunit. In Nitratidesulfovibrio vulgaris (strain DSM 19637 / Miyazaki F) (Desulfovibrio vulgaris), this protein is Small ribosomal subunit protein bS18.